The chain runs to 382 residues: N-acetylglucosamine-6-phosphate deacetylase (382 aa).

Glu-131 serves as a coordination point for a divalent metal cation. 142-143 (TH) provides a ligand contact to substrate. A divalent metal cation is bound by residues His-195 and His-216. Residues 219 to 220 (NA), Arg-227, and 248 to 251 (DGLH) each bind substrate. The Proton donor/acceptor role is filled by Asp-273. 306–308 (LSG) serves as a coordination point for substrate.

This sequence belongs to the metallo-dependent hydrolases superfamily. NagA family. As to quaternary structure, homotetramer. A divalent metal cation serves as cofactor.

It catalyses the reaction N-acetyl-D-glucosamine 6-phosphate + H2O = D-glucosamine 6-phosphate + acetate. The protein operates within amino-sugar metabolism; N-acetylneuraminate degradation; D-fructose 6-phosphate from N-acetylneuraminate: step 4/5. Functionally, involved in the first committed step in the biosynthesis of amino-sugar-nucleotides. Catalyzes the hydrolysis of the N-acetyl group of N-acetylglucosamine-6-phosphate (GlcNAc-6-P) to yield glucosamine 6-phosphate and acetate. Can probably also catalyze the deacetylation of N-acetyl-D-galactosamine 6-phosphate to D-galactosamine 6-phosphate. The sequence is that of N-acetylglucosamine-6-phosphate deacetylase (nagA) from Escherichia coli O157:H7.